Consider the following 602-residue polypeptide: FAD-binding monooxygenase hmp7 (602 aa).

Residues 108–111 (TWYW), 120–121 (DV), and Y126 each bind FAD. 118–120 (QCD) contacts NADP(+). Residues 252–258 (TGATAVQ) and 275–276 (RT) contribute to the NADP(+) site.

Belongs to the FAD-binding monooxygenase family. FAD serves as cofactor.

It participates in secondary metabolite biosynthesis. FAD-binding monooxygenase; part of the gene cluster that mediates the biosynthesis of hypothemycin, a resorcylic acid lactone (RAL) that irreversibly inhibits a subset of protein kinases with a conserved cysteine in the ATP binding site such as human ERK2. The first step is performed by both PKSs hmp3 and hmp8 and leads to the production of 7',8'-dehydrozearalenol (DHZ). The highly reducing PKS hpm8 synthesizes the reduced hexaketide (7S,11S,2E,8E)-7,11-dihydroxy-dodeca-2,8-dienoate, which is transferred downstream to the non-reducing PKS hpm3. Hpm3 then extends the reduced hexaketide to a nonaketide, after which regioselective cyclization and macrolactonization affords DHZ. The next step is the conversion of DHZ into aigialomycin C and is performed by the O-methyltransferase hmp5, the FAD-binding monooxygenase hmp7, and the cytochrome P450 monooxygenase hmp1. The wide substrate tolerance of the hmp5 and hmp7 implies that the reactions from DHZ to aigialomycin C can occur in any order. The steps from aigialomycin C to hypothemycin are less well established. The FAD-linked oxidoreductase hmp9 presumably catalyzes oxidation of the C-6' hydroxyl to a ketone. The timing of this oxidation is important, since the resulting enone functional group is a Michael acceptor that can react spontaneously with glutathione, an abundant metabolite in fungal cells. The glutathione S-transferase hmp2 catalyzes cis-trans isomerization of the 7',8' double bond with equilibrium favoring the trans isomer. The hpm6-encoded transporter might preferentially pump hypothemycin out of the cell relative to the trans isomer aigialomycin A. The cis-to-trans isomerization may be coupled with C-4' hydroxylation, since all known hypothemycin analogs containing the enone functional group also have hydroxyl groups at both C-4' and C-5'. The chain is FAD-binding monooxygenase hmp7 from Hypomyces subiculosus (Nectria subiculosa).